Here is a 543-residue protein sequence, read N- to C-terminus: CTP synthase (543 aa).

An amidoligase domain region spans residues 1–267 (MKQTKYIFVT…LSPIAEILDL (267 aa)). Position 15 (Ser-15) interacts with CTP. Residue Ser-15 participates in UTP binding. Residues 16 to 21 (SLGKGI) and Asp-73 contribute to the ATP site. Mg(2+) is bound by residues Asp-73 and Glu-141. CTP-binding positions include 148–150 (DIE), 188–193 (KTKPTQ), and Lys-224. UTP is bound by residues 188–193 (KTKPTQ) and Lys-224. The Glutamine amidotransferase type-1 domain occupies 292 to 543 (KIAFVGKYVD…IKAAINYEDN (252 aa)). Gly-354 lines the L-glutamine pocket. Residue Cys-381 is the Nucleophile; for glutamine hydrolysis of the active site. L-glutamine is bound by residues 382-385 (LGMQ), Glu-405, and Arg-473. Residues His-516 and Glu-518 contribute to the active site.

It belongs to the CTP synthase family. In terms of assembly, homotetramer.

The enzyme catalyses UTP + L-glutamine + ATP + H2O = CTP + L-glutamate + ADP + phosphate + 2 H(+). It carries out the reaction L-glutamine + H2O = L-glutamate + NH4(+). The catalysed reaction is UTP + NH4(+) + ATP = CTP + ADP + phosphate + 2 H(+). It functions in the pathway pyrimidine metabolism; CTP biosynthesis via de novo pathway; CTP from UDP: step 2/2. Its activity is regulated as follows. Allosterically activated by GTP, when glutamine is the substrate; GTP has no effect on the reaction when ammonia is the substrate. The allosteric effector GTP functions by stabilizing the protein conformation that binds the tetrahedral intermediate(s) formed during glutamine hydrolysis. Inhibited by the product CTP, via allosteric rather than competitive inhibition. In terms of biological role, catalyzes the ATP-dependent amination of UTP to CTP with either L-glutamine or ammonia as the source of nitrogen. Regulates intracellular CTP levels through interactions with the four ribonucleotide triphosphates. This chain is CTP synthase, found in Campylobacter jejuni subsp. jejuni serotype O:23/36 (strain 81-176).